The sequence spans 505 residues: Deoxyguanosinetriphosphate triphosphohydrolase (505 aa).

The HD domain maps to 66 to 273 (RLTHSMEVQQ…MEAADDISYC (208 aa)).

This sequence belongs to the dGTPase family. Type 1 subfamily. As to quaternary structure, homotetramer. Requires Mg(2+) as cofactor.

The catalysed reaction is dGTP + H2O = 2'-deoxyguanosine + triphosphate + H(+). In terms of biological role, dGTPase preferentially hydrolyzes dGTP over the other canonical NTPs. The chain is Deoxyguanosinetriphosphate triphosphohydrolase from Escherichia fergusonii (strain ATCC 35469 / DSM 13698 / CCUG 18766 / IAM 14443 / JCM 21226 / LMG 7866 / NBRC 102419 / NCTC 12128 / CDC 0568-73).